A 356-amino-acid polypeptide reads, in one-letter code: SERTA domain-containing protein 4 (356 aa).

Positions 33–53 are disordered; sequence SYGGPSPPGPAQAPLQGDRGA. Residues 101-147 enclose the SERTA domain; that stretch reads IFEERAHILYMSLEKLKFIDDPEVYLRRSVLINNLMKRIHGEIIMQN. A compositionally biased stretch (low complexity) spans 215–232; sequence TAASSPSASSSSSSSSSS. Disordered stretches follow at residues 215–238, 280–302, and 332–356; these read TAAS…LPLP, KLND…HEPV, and WKKS…GSKI. The segment covering 280–292 has biased composition (basic and acidic residues); that stretch reads KLNDEKANDDTNR.

This chain is SERTA domain-containing protein 4 (SERTAD4), found in Homo sapiens (Human).